Reading from the N-terminus, the 344-residue chain is tRNA N6-adenosine threonylcarbamoyltransferase (344 aa).

Fe cation-binding residues include His118 and His122. Residues 141–145 (TASGG), Asp174, Gly187, and Asn284 each bind substrate. Position 312 (Asp312) interacts with Fe cation.

The protein belongs to the KAE1 / TsaD family. It depends on Fe(2+) as a cofactor.

The protein localises to the cytoplasm. The enzyme catalyses L-threonylcarbamoyladenylate + adenosine(37) in tRNA = N(6)-L-threonylcarbamoyladenosine(37) in tRNA + AMP + H(+). Its function is as follows. Required for the formation of a threonylcarbamoyl group on adenosine at position 37 (t(6)A37) in tRNAs that read codons beginning with adenine. Is involved in the transfer of the threonylcarbamoyl moiety of threonylcarbamoyl-AMP (TC-AMP) to the N6 group of A37, together with TsaE and TsaB. TsaD likely plays a direct catalytic role in this reaction. This Desulfotalea psychrophila (strain LSv54 / DSM 12343) protein is tRNA N6-adenosine threonylcarbamoyltransferase.